A 282-amino-acid chain; its full sequence is DegV domain-containing protein M6_Spy0690 (282 aa).

The 278-residue stretch at 3 to 280 (LAVITDSTAT…EGAIAFGVTP (278 aa)) folds into the DegV domain. Residues threonine 61 and serine 94 each coordinate hexadecanoate.

May bind long-chain fatty acids, such as palmitate, and may play a role in lipid transport or fatty acid metabolism. The protein is DegV domain-containing protein M6_Spy0690 of Streptococcus pyogenes serotype M6 (strain ATCC BAA-946 / MGAS10394).